Consider the following 274-residue polypeptide: Acetyl-coenzyme A carboxylase carboxyl transferase subunit beta (274 aa).

Residues 18–274 (IWTKCKKCDY…FYNRQCFLKF (257 aa)) enclose the CoA carboxyltransferase N-terminal domain. Cys22, Cys25, Cys41, and Cys44 together coordinate Zn(2+). Residues 22 to 44 (CKKCDYILLQKDFEENLMVCPKC) form a C4-type zinc finger.

Belongs to the AccD/PCCB family. As to quaternary structure, acetyl-CoA carboxylase is a heterohexamer composed of biotin carboxyl carrier protein (AccB), biotin carboxylase (AccC) and two subunits each of ACCase subunit alpha (AccA) and ACCase subunit beta (AccD). Zn(2+) serves as cofactor.

The protein localises to the cytoplasm. The enzyme catalyses N(6)-carboxybiotinyl-L-lysyl-[protein] + acetyl-CoA = N(6)-biotinyl-L-lysyl-[protein] + malonyl-CoA. It participates in lipid metabolism; malonyl-CoA biosynthesis; malonyl-CoA from acetyl-CoA: step 1/1. Its function is as follows. Component of the acetyl coenzyme A carboxylase (ACC) complex. Biotin carboxylase (BC) catalyzes the carboxylation of biotin on its carrier protein (BCCP) and then the CO(2) group is transferred by the transcarboxylase to acetyl-CoA to form malonyl-CoA. The sequence is that of Acetyl-coenzyme A carboxylase carboxyl transferase subunit beta from Endomicrobium trichonymphae.